Consider the following 509-residue polypeptide: Ankyrin repeat domain-containing protein 13C (509 aa).

The span at 1–19 shows a compositional bias: basic and acidic residues; that stretch reads MTGEKIRSLHRDQKPSKDE. The segment at 1-42 is disordered; sequence MTGEKIRSLHRDQKPSKDEDLLEPDEEATAGGTFTRTGKLKN. 3 ANK repeats span residues 79-110, 111-140, and 144-173; these read DAYFPVHECVFKGDIRRLSSLIRSHSIGQKDN, HGNTPLHLAVMLGNKECAHLLLAHNAPVKV, and QGWSPLAEAISYGDRQMITALLRKLKQQSR.

It is found in the endoplasmic reticulum membrane. In terms of biological role, acts as a molecular chaperone for G protein-coupled receptors, regulating their biogenesis and exit from the ER. This Xenopus tropicalis (Western clawed frog) protein is Ankyrin repeat domain-containing protein 13C (ankrd13c).